We begin with the raw amino-acid sequence, 247 residues long: Neurotrophic factor BDNF precursor form (247 aa).

An N-terminal signal peptide occupies residues 1-18; it reads MTILFLTMVISYFGCMKA. A propeptide spanning residues 19 to 128 is cleaved from the precursor; the sequence is APMKEASVRG…AANMSMRVRR (110 aa). N-linked (GlcNAc...) asparagine glycosylation occurs at Asn-121. Disulfide bonds link Cys-141/Cys-208, Cys-186/Cys-237, and Cys-196/Cys-239.

The protein belongs to the NGF-beta family. In terms of assembly, monomers and homodimers. Binds to NTRK2/TRKB. Can form heterodimers with other neurotrophin family members, such as NTF3 and NTF4 (in vitro), but the physiological relevance of this is not clear. BDNF precursor form: interacts with the heterodimer formed by NGFR and SORCS2. Mature BDNF has much lower affinity for the heterodimer formed by NGFR and SORCS2. Post-translationally, N-glycosylated and glycosulfated, contrary to mature BDNF. Mature BDNF is produced by proteolytic removal of the propeptide, catalyzed by a FURIN family member. In addition, the precursor form is proteolytically cleaved within the propeptide, but this is not an obligatory intermediate for the production of mature BDNF. Can be converted into mature BDNF by plasmin (PLG).

It is found in the secreted. Functionally, important signaling molecule that activates signaling cascades downstream of NTRK2. During development, promotes the survival and differentiation of selected neuronal populations of the peripheral and central nervous systems. Participates in axonal growth, pathfinding and in the modulation of dendritic growth and morphology. Major regulator of synaptic transmission and plasticity at adult synapses in many regions of the CNS. The versatility of BDNF is emphasized by its contribution to a range of adaptive neuronal responses including long-term potentiation (LTP), long-term depression (LTD), certain forms of short-term synaptic plasticity, as well as homeostatic regulation of intrinsic neuronal excitability. This Canis lupus familiaris (Dog) protein is Neurotrophic factor BDNF precursor form (BDNF).